The following is a 299-amino-acid chain: Bifunctional protein FolD 1 (299 aa).

Residues 168–170, Ser-193, and Ile-234 each bind NADP(+); that span reads GRS.

Belongs to the tetrahydrofolate dehydrogenase/cyclohydrolase family. Homodimer.

It catalyses the reaction (6R)-5,10-methylene-5,6,7,8-tetrahydrofolate + NADP(+) = (6R)-5,10-methenyltetrahydrofolate + NADPH. It carries out the reaction (6R)-5,10-methenyltetrahydrofolate + H2O = (6R)-10-formyltetrahydrofolate + H(+). It functions in the pathway one-carbon metabolism; tetrahydrofolate interconversion. In terms of biological role, catalyzes the oxidation of 5,10-methylenetetrahydrofolate to 5,10-methenyltetrahydrofolate and then the hydrolysis of 5,10-methenyltetrahydrofolate to 10-formyltetrahydrofolate. The protein is Bifunctional protein FolD 1 of Mesorhizobium japonicum (strain LMG 29417 / CECT 9101 / MAFF 303099) (Mesorhizobium loti (strain MAFF 303099)).